The primary structure comprises 275 residues: Chemotaxis protein methyltransferase 1 (275 aa).

The region spanning 1–275 (MTAITISDQE…CNPGIIYKLK (275 aa)) is the CheR-type methyltransferase domain. S-adenosyl-L-methionine is bound by residues Asn76, Thr78, Arg82, Glu117, Asp145, 201–202 (NL), and 218–219 (RN).

It catalyses the reaction L-glutamyl-[protein] + S-adenosyl-L-methionine = [protein]-L-glutamate 5-O-methyl ester + S-adenosyl-L-homocysteine. Functionally, methylation of the membrane-bound methyl-accepting chemotaxis proteins (MCP) to form gamma-glutamyl methyl ester residues in MCP. The sequence is that of Chemotaxis protein methyltransferase 1 (cheR1) from Vibrio cholerae serotype O1 (strain ATCC 39315 / El Tor Inaba N16961).